Reading from the N-terminus, the 1083-residue chain is Kinesin-like protein klp-19 (1083 aa).

A Kinesin motor domain is found at 6–328; the sequence is SLRVVVRARP…LRYADRAKQI (323 aa). 85–92 lines the ATP pocket; it reads GQTGSGKT. Residues 408–435 adopt a coiled-coil conformation; the sequence is MSALTQKNSRLEEDKAKLQSMLTDVRNT. Residues 458–471 are compositionally biased toward acidic residues; that stretch reads TEESTTLADDDNDE. A disordered region spans residues 458-479; it reads TEESTTLADDDNDETALGGQDD. The stretch at 487-650 forms a coiled coil; it reads LPELQAELDD…KSKLQKREND (164 aa). A compositionally biased stretch (polar residues) spans 1044-1055; it reads DDSQPSPSNSTF. Residues 1044–1083 are disordered; that stretch reads DDSQPSPSNSTFVIGAAPTSEADGVPPIKRKSRRTDLGPL.

The protein belongs to the TRAFAC class myosin-kinesin ATPase superfamily. Kinesin family. Expressed in the gonad.

It localises to the nucleus. The protein resides in the nucleoplasm. It is found in the cytoplasm. Its subcellular location is the cytoskeleton. The protein localises to the spindle. It localises to the chromosome. Its function is as follows. Required for chromosome movement and orientation on spindle poles in mitosis and meiosis. May play a role in early anterior-posterior chromosome movement in mitotic embryos. In Caenorhabditis elegans, this protein is Kinesin-like protein klp-19.